A 496-amino-acid polypeptide reads, in one-letter code: Solute carrier family 2, facilitated glucose transporter member 3 (496 aa).

At 1–10 (MGTQKVTPAL) the chain is on the cytoplasmic side. Residues 11–32 (IFAITVATIGSFQFGYNTGVIN) traverse the membrane as a helical segment. The Extracellular segment spans residues 33-64 (APEKIIKEFINKTLTDKGNAPPSEVLLTSLWS). N-linked (GlcNAc...) asparagine glycosylation occurs at N43. The chain crosses the membrane as a helical span at residues 65–85 (LSVAIFSVGGMIGSFSVGLFV). Over 86 to 90 (NRFGR) the chain is Cytoplasmic. The helical transmembrane segment at 91–111 (RNSMLIVNLLAVTGGCFMGLC) threads the bilayer. The Extracellular portion of the chain corresponds to 112–118 (KVAKSVE). A helical membrane pass occupies residues 119 to 142 (MLILGRLIIGLFCGLCTGFVPMYI). The Cytoplasmic segment spans residues 143-153 (GEISPTALRGA). The helical transmembrane segment at 154-174 (FGTLNQLGIVVGILVAQIFGL) threads the bilayer. Q159 lines the D-glucose pocket. The Extracellular portion of the chain corresponds to 175–183 (EFILGSEEL). A helical membrane pass occupies residues 184–204 (WPLLLGFTILPTILQSAALPF). Topologically, residues 205 to 269 (CPESPRFLLI…LFRVSSYRQP (65 aa)) are cytoplasmic. Position 232 is a phosphothreonine (T232). The helical transmembrane segment at 270–290 (IIISIVLQLSQQLSGINAVFY) threads the bilayer. Residues 277-279 (QLS) are important for selectivity against fructose. D-glucose-binding positions include 280–281 (QQ) and N286. Residues 291–304 (YSTGIFKDAGVQEP) are Extracellular-facing. Residues 305 to 325 (IYATIGAGVVNTIFTVVSLFL) form a helical membrane-spanning segment. N315 provides a ligand contact to D-glucose. Residues 326–331 (VERAGR) lie on the Cytoplasmic side of the membrane. Residues 332–352 (RTLHMIGLGGMAFCSTLMTVS) traverse the membrane as a helical segment. The Extracellular segment spans residues 353-363 (LLLKDNYNGMS). Residues 364 to 389 (FVCIGAILVFVAFFEIGPGPIPWFIV) form a helical membrane-spanning segment. Residues E378 and W386 each contribute to the D-glucose site. The Cytoplasmic portion of the chain corresponds to 390-399 (AELFSQGPRP). The helical transmembrane segment at 400–420 (AAMAVAGCSNWTSNFLVGLLF) threads the bilayer. The Extracellular portion of the chain corresponds to 421 to 429 (PSAAHYLGA). A helical membrane pass occupies residues 430-450 (YVFIIFTGFLITFLAFTFFKV). Topologically, residues 451–496 (PETRGRTFEDITRAFEGQAHGADRSGKDGVMEVNSIEPAKETTTNV) are cytoplasmic. S475 and S485 each carry phosphoserine. T492 is modified (phosphothreonine).

This sequence belongs to the major facilitator superfamily. Sugar transporter (TC 2.A.1.1) family. Glucose transporter subfamily. Interacts with SMIM43; the interaction may promote SLC2A3-mediated glucose transport to meet the energy needs of mesendoderm differentiation.

The protein localises to the cell membrane. Its subcellular location is the perikaryon. It localises to the cell projection. The enzyme catalyses D-glucose(out) = D-glucose(in). The catalysed reaction is D-galactose(in) = D-galactose(out). Deoxyglucose transport is inhibited by D-glucose, D-galactose and maltose. Galactose transport is inhibited by D-glucose and maltose. Its function is as follows. Facilitative glucose transporter. Can also mediate the uptake of various other monosaccharides across the cell membrane. Mediates the uptake of glucose, 2-deoxyglucose, galactose, mannose, xylose and fucose, and probably also dehydroascorbate. Does not mediate fructose transport. Required for mesendoderm differentiation. This chain is Solute carrier family 2, facilitated glucose transporter member 3, found in Pongo abelii (Sumatran orangutan).